Reading from the N-terminus, the 254-residue chain is MAAPRAFLHLGAREWHGRARGTHSMSGLATPDSNREKKRTLLQFLSDHFHDVQTLREYLLQKQISKVSMENRSYRKIQERYGPYITGAQFILKQGGAVKFQGRDWIRPNDRGHSIAELQKVPVEAVDASGCAINYQGLSNLLPLKELQFLSLQRCPNLDDWCLSRLYLLAGSLQELSLAGCPRISERGLACLHHLQNLRRLDISDLPAVSHPGLTQILVEEMLPHCEVLGVDWAKSLKLGPDDQPPDTSSPLSS.

Ser250 is modified (phosphoserine).

Belongs to the ATP synthase subunit s family. As to quaternary structure, interacts with incompletely assembled mitochondrial NADH:ubiquinone oxidoreductase complex (complex I).

Its subcellular location is the mitochondrion. Functionally, required for the assembly of the mitochondrial NADH:ubiquinone oxidoreductase complex (complex I). Involved in the assembly of the distal region of complex I. The chain is Distal membrane-arm assembly complex protein 2 from Rattus norvegicus (Rat).